A 185-amino-acid polypeptide reads, in one-letter code: Transmembrane protein 252 (185 aa).

2 helical membrane passes run 8–28 and 39–59; these read VLCA…GFFI and LVVA…GIFW. Residues 125–149 form a disordered region; it reads YTETSLEPQDKDKNDPQPEAPPPYP.

The protein localises to the membrane. This Rattus norvegicus (Rat) protein is Transmembrane protein 252 (Tmem252).